The primary structure comprises 92 residues: Putative septation protein SpoVG (92 aa).

This sequence belongs to the SpoVG family.

In terms of biological role, could be involved in septation. The sequence is that of Putative septation protein SpoVG from Clostridium botulinum (strain Eklund 17B / Type B).